A 314-amino-acid polypeptide reads, in one-letter code: MIEIEKPKIETVEISENATFGKFVVEPLERGYGATLGNSLRRILLSSLPGAAVTTVQIDGALHEFSTVDGVVEDVTTIILNLKKLALKIYSEEPKTLEIDVQGEGAVTAADLTYDSDVEVMNPDLHIATLNSKGNLHMKLIAERGRGYRPAEENKNDDQPIGVIPIDSIFTPVSRVTYQVENTRVGQVANYDKLTMDVSTDGSIRPEEAVSLGAKIITEHLNIFVGLTDEAQNAEIMVEKEEDQKEKVMEMTIEELDLSVRSYNCLKRAGINTVQELANKSEEDMMKVRNLGRKSLEEVKVKLEDLGLGLRDDD.

Residues 1 to 228 are alpha N-terminal domain (alpha-NTD); that stretch reads MIEIEKPKIE…EHLNIFVGLT (228 aa). Residues 245-314 form an alpha C-terminal domain (alpha-CTD) region; that stretch reads KEKVMEMTIE…DLGLGLRDDD (70 aa).

The protein belongs to the RNA polymerase alpha chain family. Homodimer. The RNAP catalytic core consists of 2 alpha, 1 beta, 1 beta' and 1 omega subunit. When a sigma factor is associated with the core the holoenzyme is formed, which can initiate transcription.

The enzyme catalyses RNA(n) + a ribonucleoside 5'-triphosphate = RNA(n+1) + diphosphate. Functionally, DNA-dependent RNA polymerase catalyzes the transcription of DNA into RNA using the four ribonucleoside triphosphates as substrates. The polypeptide is DNA-directed RNA polymerase subunit alpha (Oceanobacillus iheyensis (strain DSM 14371 / CIP 107618 / JCM 11309 / KCTC 3954 / HTE831)).